The chain runs to 62 residues: Cytotoxin 6 (62 aa).

An N-terminal signal peptide occupies residues 1–2; it reads YT. Intrachain disulfides connect Cys5-Cys23, Cys16-Cys40, Cys44-Cys55, and Cys56-Cys61.

It belongs to the three-finger toxin family. Short-chain subfamily. Type IA cytotoxin sub-subfamily. As to quaternary structure, monomer in solution; Homodimer and oligomer in the presence of negatively charged lipids forming a pore with a size ranging between 20 and 30 Angstroms. In terms of tissue distribution, expressed by the venom gland.

Its subcellular location is the secreted. It is found in the target cell membrane. Its function is as follows. Shows cytolytic activity on many different cells by forming pore in lipid membranes. In vivo, increases heart rate or kills the animal by cardiac arrest. In addition, it binds to heparin with high affinity, interacts with Kv channel-interacting protein 1 (KCNIP1) in a calcium-independent manner, and binds to integrin alpha-V/beta-3 (ITGAV/ITGB3) with moderate affinity. The polypeptide is Cytotoxin 6 (Naja sputatrix (Malayan spitting cobra)).